The primary structure comprises 395 residues: Sulfate adenylyltransferase (395 aa).

The protein belongs to the sulfate adenylyltransferase family.

It catalyses the reaction sulfate + ATP + H(+) = adenosine 5'-phosphosulfate + diphosphate. The protein operates within sulfur metabolism; hydrogen sulfide biosynthesis; sulfite from sulfate: step 1/3. This chain is Sulfate adenylyltransferase, found in Synechococcus elongatus (strain ATCC 33912 / PCC 7942 / FACHB-805) (Anacystis nidulans R2).